We begin with the raw amino-acid sequence, 294 residues long: Phosphatidylserine decarboxylase proenzyme (294 aa).

Residues D100, H157, and S261 each act as charge relay system; for autoendoproteolytic cleavage activity in the active site. The active-site Schiff-base intermediate with substrate; via pyruvic acid; for decarboxylase activity is the S261. Pyruvic acid (Ser); by autocatalysis is present on S261.

This sequence belongs to the phosphatidylserine decarboxylase family. PSD-B subfamily. Prokaryotic type I sub-subfamily. In terms of assembly, heterodimer of a large membrane-associated beta subunit and a small pyruvoyl-containing alpha subunit. Pyruvate serves as cofactor. Is synthesized initially as an inactive proenzyme. Formation of the active enzyme involves a self-maturation process in which the active site pyruvoyl group is generated from an internal serine residue via an autocatalytic post-translational modification. Two non-identical subunits are generated from the proenzyme in this reaction, and the pyruvate is formed at the N-terminus of the alpha chain, which is derived from the carboxyl end of the proenzyme. The autoendoproteolytic cleavage occurs by a canonical serine protease mechanism, in which the side chain hydroxyl group of the serine supplies its oxygen atom to form the C-terminus of the beta chain, while the remainder of the serine residue undergoes an oxidative deamination to produce ammonia and the pyruvoyl prosthetic group on the alpha chain. During this reaction, the Ser that is part of the protease active site of the proenzyme becomes the pyruvoyl prosthetic group, which constitutes an essential element of the active site of the mature decarboxylase.

It is found in the cell membrane. It carries out the reaction a 1,2-diacyl-sn-glycero-3-phospho-L-serine + H(+) = a 1,2-diacyl-sn-glycero-3-phosphoethanolamine + CO2. The protein operates within phospholipid metabolism; phosphatidylethanolamine biosynthesis; phosphatidylethanolamine from CDP-diacylglycerol: step 2/2. Catalyzes the formation of phosphatidylethanolamine (PtdEtn) from phosphatidylserine (PtdSer). This is Phosphatidylserine decarboxylase proenzyme from Mannheimia succiniciproducens (strain KCTC 0769BP / MBEL55E).